The chain runs to 514 residues: GMP synthase [glutamine-hydrolyzing] (514 aa).

A Glutamine amidotransferase type-1 domain is found at 7–197; that stretch reads KVLILDFGSQ…LFNICKCERN (191 aa). The active-site Nucleophile is Cys84. Catalysis depends on residues His171 and Glu173. The region spanning 198-389 is the GMPS ATP-PPase domain; sequence WNMGSFIEYE…LKLPEDIVYR (192 aa). Residue 225-231 coordinates ATP; the sequence is SGGVDSS.

Homodimer.

It carries out the reaction XMP + L-glutamine + ATP + H2O = GMP + L-glutamate + AMP + diphosphate + 2 H(+). The protein operates within purine metabolism; GMP biosynthesis; GMP from XMP (L-Gln route): step 1/1. In terms of biological role, catalyzes the synthesis of GMP from XMP. The polypeptide is GMP synthase [glutamine-hydrolyzing] (Brachyspira hyodysenteriae (strain ATCC 49526 / WA1)).